The sequence spans 95 residues: Class I hydrophobin 13 (95 aa).

4 disulfide bridges follow: Cys14–Cys74, Cys21–Cys68, Cys22–Cys55, and Cys75–Cys88. Residues Asn23 and Asn77 are each glycosylated (N-linked (GlcNAc...) asparagine).

It belongs to the fungal hydrophobin family. In terms of assembly, self-assembles to form functional amyloid fibrils called rodlets. Self-assembly into fibrillar rodlets occurs spontaneously at hydrophobic:hydrophilic interfaces and the rodlets further associate laterally to form amphipathic monolayers.

The protein localises to the secreted. The protein resides in the cell wall. Functionally, aerial growth, conidiation, and dispersal of filamentous fungi in the environment rely upon a capability of their secreting small amphipathic proteins called hydrophobins (HPBs) with low sequence identity. Class I can self-assemble into an outermost layer of rodlet bundles on aerial cell surfaces, conferring cellular hydrophobicity that supports fungal growth, development and dispersal; whereas Class II form highly ordered films at water-air interfaces through intermolecular interactions but contribute nothing to the rodlet structure. The chain is Class I hydrophobin 13 from Pleurotus ostreatus (strain PC15) (Oyster mushroom).